Reading from the N-terminus, the 240-residue chain is tRNA (guanine-N(7)-)-methyltransferase (240 aa).

S-adenosyl-L-methionine is bound by residues glutamate 71, glutamate 96, aspartate 123, and aspartate 146. Aspartate 146 is an active-site residue. Residues lysine 150, aspartate 182, and 219–222 (TKFE) contribute to the substrate site.

It belongs to the class I-like SAM-binding methyltransferase superfamily. TrmB family.

It catalyses the reaction guanosine(46) in tRNA + S-adenosyl-L-methionine = N(7)-methylguanosine(46) in tRNA + S-adenosyl-L-homocysteine. It participates in tRNA modification; N(7)-methylguanine-tRNA biosynthesis. Catalyzes the formation of N(7)-methylguanine at position 46 (m7G46) in tRNA. The sequence is that of tRNA (guanine-N(7)-)-methyltransferase from Hydrogenovibrio crunogenus (strain DSM 25203 / XCL-2) (Thiomicrospira crunogena).